We begin with the raw amino-acid sequence, 559 residues long: CCR4-NOT transcription complex subunit 6-like (559 aa).

A required for interaction with cnot1, cnot3 and cnot7 region spans residues 1 to 148; it reads MPKEKYDPPD…LYQEPDGTRK (148 aa). Residues 1–550 are nuclease domain; it reads MPKEKYDPPD…NGLHLPVHST (550 aa). LRR repeat units follow at residues 52-73, 75-96, 98-120, and 121-143; these read HLTA…IAKL, HLVY…LGNM, TLRE…GRLF, and QLQT…YQEP. Glu235 provides a ligand contact to Mg(2+). Substrate is bound by residues Glu235, Glu271, His353, and Pro358. Residue Asp405 participates in Mg(2+) binding. Asp405 serves as the catalytic Proton donor/acceptor. Substrate contacts are provided by Asn407, Asn474, and Phe479.

Belongs to the CCR4/nocturin family. Component of the CCR4-NOT complex. The cofactor is Mg(2+).

The protein resides in the cytoplasm. It localises to the nucleus. The catalysed reaction is Exonucleolytic cleavage of poly(A) to 5'-AMP.. Poly(A) nuclease with 3'-5' RNase activity. Catalytic component of the CCR4-NOT complex which is one of the major cellular mRNA deadenylases and is linked to various cellular processes including bulk mRNA degradation, miRNA-mediated repression, translational repression during translational initiation and general transcription regulation. Additional complex functions may be a consequence of its influence on mRNA expression. The protein is CCR4-NOT transcription complex subunit 6-like (cnot6l) of Danio rerio (Zebrafish).